We begin with the raw amino-acid sequence, 440 residues long: Chorismate synthase 1, chloroplastic (440 aa).

Residues 1 to 54 constitute a chloroplast transit peptide; sequence MASFVPTKQFVGASSSSDIGSSRLVSLQLPSKFSSSNFHLPSRPSQLKRLEIQA. The disordered stretch occupies residues 100–147; the sequence is RRRPGQSRITTPRKETDTCKISSGTADGLTTGSPIKVEVPNTDQRGND. Over residues 118-132 the composition is skewed to polar residues; sequence CKISSGTADGLTTGS.

Belongs to the chorismate synthase family. Homotetramer. The cofactor is FMNH2. In terms of tissue distribution, predominantly expressed in flowers and roots and, to a lesser extent, in stems, leaves, and cotyledons.

It is found in the plastid. The protein resides in the chloroplast. It catalyses the reaction 5-O-(1-carboxyvinyl)-3-phosphoshikimate = chorismate + phosphate. It functions in the pathway metabolic intermediate biosynthesis; chorismate biosynthesis; chorismate from D-erythrose 4-phosphate and phosphoenolpyruvate: step 7/7. Its function is as follows. Catalyzes the last common step of the biosynthesis of aromatic amino acids, produced via the shikimic acid pathway. The polypeptide is Chorismate synthase 1, chloroplastic (CS1) (Solanum lycopersicum (Tomato)).